Here is a 522-residue protein sequence, read N- to C-terminus: Vicilin-like seed storage protein At4g36700 (522 aa).

The signal sequence occupies residues 1 to 25 (MTRFAVLPLSVLLLVLLFLCTESLA). N-linked (GlcNAc...) asparagine glycans are attached at residues asparagine 206, asparagine 303, asparagine 341, asparagine 374, and asparagine 414. The region spanning 265-421 (FNVFESEPDF…SLNVSSVTID (157 aa)) is the Cupin type-1 domain. The disordered stretch occupies residues 457–522 (DERKRRHDER…EWEMEGEEES (66 aa)). Composition is skewed to basic and acidic residues over residues 466–491 (RKKE…EKKR) and 501–515 (EELR…KEWE).

It belongs to the 7S seed storage protein family.

Seed storage protein. In Arabidopsis thaliana (Mouse-ear cress), this protein is Vicilin-like seed storage protein At4g36700.